The sequence spans 444 residues: Serine carboxypeptidase 2 (444 aa).

60–62 serves as a coordination point for substrate; that stretch reads NGG. Disulfide bonds link C65–C324, C222–C234, and C258–C291. N-linked (GlcNAc...) asparagine glycosylation is found at N116 and N127. Position 157 to 159 (157 to 159) interacts with substrate; it reads ESY. Residue S158 is part of the active site. A glycan (N-linked (GlcNAc...) asparagine) is linked at N259. A propeptide spans 260–286 (linker peptide); it reads ITSSSSSSSSSLSQQRRSRGRYPWLTG. N312 and N318 each carry an N-linked (GlcNAc...) asparagine glycan. Residues D361 and H413 contribute to the active site. Position 409–413 (409–413) interacts with substrate; the sequence is RGAGH.

Belongs to the peptidase S10 family. In terms of assembly, carboxypeptidase II is a dimer, where each monomer is composed of two chains linked by a disulfide bond. Post-translationally, N-glycosylated.

It carries out the reaction Preferential release of a C-terminal arginine or lysine residue.. The sequence is that of Serine carboxypeptidase 2 (CBP2) from Triticum aestivum (Wheat).